The primary structure comprises 430 residues: Serine--tRNA ligase (430 aa).

237-239 (TAE) lines the L-serine pocket. 268–270 (RSE) serves as a coordination point for ATP. Position 291 (glutamate 291) interacts with L-serine. 355–358 (EISS) is a binding site for ATP. Residue serine 391 coordinates L-serine.

Belongs to the class-II aminoacyl-tRNA synthetase family. Type-1 seryl-tRNA synthetase subfamily. In terms of assembly, homodimer. The tRNA molecule binds across the dimer.

The protein resides in the cytoplasm. The catalysed reaction is tRNA(Ser) + L-serine + ATP = L-seryl-tRNA(Ser) + AMP + diphosphate + H(+). It catalyses the reaction tRNA(Sec) + L-serine + ATP = L-seryl-tRNA(Sec) + AMP + diphosphate + H(+). The protein operates within aminoacyl-tRNA biosynthesis; selenocysteinyl-tRNA(Sec) biosynthesis; L-seryl-tRNA(Sec) from L-serine and tRNA(Sec): step 1/1. Catalyzes the attachment of serine to tRNA(Ser). Is also able to aminoacylate tRNA(Sec) with serine, to form the misacylated tRNA L-seryl-tRNA(Sec), which will be further converted into selenocysteinyl-tRNA(Sec). The chain is Serine--tRNA ligase from Salmonella paratyphi C (strain RKS4594).